A 377-amino-acid polypeptide reads, in one-letter code: Putative glutamate--cysteine ligase 2 (377 aa).

The protein belongs to the glutamate--cysteine ligase type 2 family. YbdK subfamily.

It carries out the reaction L-cysteine + L-glutamate + ATP = gamma-L-glutamyl-L-cysteine + ADP + phosphate + H(+). ATP-dependent carboxylate-amine ligase which exhibits weak glutamate--cysteine ligase activity. The protein is Putative glutamate--cysteine ligase 2 of Pseudomonas aeruginosa (strain LESB58).